A 127-amino-acid chain; its full sequence is uncharacterized protein (127 aa).

The signal sequence occupies residues 1 to 16; it reads MIKKIIFGIAILLSTS. A lipid anchor (N-palmitoyl cysteine) is attached at Cys-17. The S-diacylglycerol cysteine moiety is linked to residue Cys-17. Positions 56 to 101 form a coiled coil; it reads EVREEIQKYRVAIVKINKKKRELYNRLSKEAQNFLAEQQKYKQKLS. Residues 107–118 are compositionally biased toward polar residues; that stretch reads VENDQKNNTADS. A disordered region spans residues 107–127; the sequence is VENDQKNNTADSNDNKSKDTK.

It is found in the cell membrane. This is an uncharacterized protein from Rickettsia conorii (strain ATCC VR-613 / Malish 7).